Reading from the N-terminus, the 471-residue chain is Putative multidrug resistance protein MdtD (471 aa).

Residues 1–11 lie on the Periplasmic side of the membrane; it reads MTDLPDSTRWQ. The chain crosses the membrane as a helical span at residues 12–32; sequence LWIVAFGFFMQSLDTTIVNTA. Topologically, residues 33-48 are cytoplasmic; sequence LPSMAQSLGESPLHMH. The chain crosses the membrane as a helical span at residues 49-69; sequence MVIVSYVLTVAVMLPASGWLA. Over 70–76 the chain is Periplasmic; it reads DKVGVRN. The helical transmembrane segment at 77 to 97 threads the bilayer; that stretch reads IFFTAIVLFTLGSLFCALSGT. At 98–101 the chain is on the cytoplasmic side; sequence LNEL. A helical transmembrane segment spans residues 102 to 124; that stretch reads LLARALQGVGGAMMVPVGRLTVM. Residues 125 to 137 lie on the Periplasmic side of the membrane; sequence KIVPREQYMAAMT. A helical transmembrane segment spans residues 138 to 158; it reads FVTLPGQVGPLLGPALGGLLV. Residues 159–164 lie on the Cytoplasmic side of the membrane; the sequence is EYASWH. The chain crosses the membrane as a helical span at residues 165 to 185; sequence WIFLINIPVGIIGAIATLMLM. The Periplasmic segment spans residues 186–196; the sequence is PNYTMQTRRFD. The chain crosses the membrane as a helical span at residues 197–217; that stretch reads LSGFLLLAVGMAVLTLALDGS. The Cytoplasmic segment spans residues 218-224; it reads KGTGLSP. A helical transmembrane segment spans residues 225–245; that stretch reads LAITGLVAVGVVALVLYLLHA. The Periplasmic segment spans residues 246–262; that stretch reads RNNNRALFSLKLFRTRT. A helical transmembrane segment spans residues 263–283; that stretch reads FSLGLAGSFAGRIGSGMLPFM. Over 284–285 the chain is Cytoplasmic; that stretch reads TP. Residues 286 to 306 form a helical membrane-spanning segment; the sequence is VFLQIGLGFSPFHAGLMMIPM. Residues 307 to 341 lie on the Periplasmic side of the membrane; the sequence is VLGSMGMKRIVVQVVNRFGYRRVLVATTLGLSLVT. Residues 342-362 form a helical membrane-spanning segment; sequence LLFMTTALLGWYYVLPFVLFL. At 363–395 the chain is on the cytoplasmic side; it reads QGMVNSTRFSSMNTLTLKDLPDNLASSGNSLLS. Residues 396–416 traverse the membrane as a helical segment; it reads MIMQLSMSIGVTIAGLLLGLF. Over 417–430 the chain is Periplasmic; it reads GSQHVSVDSSTTQT. A helical transmembrane segment spans residues 431–451; that stretch reads VFMYTWLSMAFIIALPAFIFA. The Cytoplasmic segment spans residues 452–471; the sequence is RVPNDTHQNVAISRRKRSAQ.

It belongs to the major facilitator superfamily. TCR/Tet family.

The protein resides in the cell inner membrane. The polypeptide is Putative multidrug resistance protein MdtD (Escherichia coli O157:H7).